We begin with the raw amino-acid sequence, 195 residues long: uncharacterized protein (195 aa).

The next 2 helical transmembrane spans lie at 13-32 (VIGL…FLVA) and 42-64 (LSNS…TILV).

The protein localises to the cell membrane. This is an uncharacterized protein from Archaeoglobus fulgidus (strain ATCC 49558 / DSM 4304 / JCM 9628 / NBRC 100126 / VC-16).